The primary structure comprises 227 residues: Probable methylthioribulose-1-phosphate dehydratase (227 aa).

Residue Cys-87 coordinates substrate. Residues His-105 and His-107 each coordinate Zn(2+). The Proton donor/acceptor role is filled by Glu-129. Zn(2+) is bound at residue His-185.

Belongs to the aldolase class II family. MtnB subfamily. Requires Zn(2+) as cofactor.

The protein resides in the cytoplasm. The enzyme catalyses 5-(methylsulfanyl)-D-ribulose 1-phosphate = 5-methylsulfanyl-2,3-dioxopentyl phosphate + H2O. It participates in amino-acid biosynthesis; L-methionine biosynthesis via salvage pathway; L-methionine from S-methyl-5-thio-alpha-D-ribose 1-phosphate: step 2/6. Catalyzes the dehydration of methylthioribulose-1-phosphate (MTRu-1-P) into 2,3-diketo-5-methylthiopentyl-1-phosphate (DK-MTP-1-P). In Drosophila mojavensis (Fruit fly), this protein is Probable methylthioribulose-1-phosphate dehydratase.